Here is a 133-residue protein sequence, read N- to C-terminus: Small ribosomal subunit protein uS9 (133 aa).

The tract at residues 94–133 (SADNRKPLKTEGHLSRDPRAKERRKYGLKKARKAPQFSKR) is disordered. Residues 95–113 (ADNRKPLKTEGHLSRDPRA) show a composition bias toward basic and acidic residues. A compositionally biased stretch (basic residues) spans 114 to 133 (KERRKYGLKKARKAPQFSKR).

This sequence belongs to the universal ribosomal protein uS9 family.

The polypeptide is Small ribosomal subunit protein uS9 (Synechococcus sp. (strain CC9605)).